The primary structure comprises 418 residues: UDP-N-acetylglucosamine 1-carboxyvinyltransferase (418 aa).

A phosphoenolpyruvate-binding site is contributed by 22–23 (KN). Arginine 92 provides a ligand contact to UDP-N-acetyl-alpha-D-glucosamine. Cysteine 116 functions as the Proton donor in the catalytic mechanism. 2-(S-cysteinyl)pyruvic acid O-phosphothioketal is present on cysteine 116. Residues 121–125 (RPIDL), aspartate 305, and leucine 327 contribute to the UDP-N-acetyl-alpha-D-glucosamine site.

This sequence belongs to the EPSP synthase family. MurA subfamily.

It localises to the cytoplasm. It carries out the reaction phosphoenolpyruvate + UDP-N-acetyl-alpha-D-glucosamine = UDP-N-acetyl-3-O-(1-carboxyvinyl)-alpha-D-glucosamine + phosphate. It participates in cell wall biogenesis; peptidoglycan biosynthesis. Functionally, cell wall formation. Adds enolpyruvyl to UDP-N-acetylglucosamine. The polypeptide is UDP-N-acetylglucosamine 1-carboxyvinyltransferase (Campylobacter lari (strain RM2100 / D67 / ATCC BAA-1060)).